We begin with the raw amino-acid sequence, 828 residues long: Translation initiation factor IF-2 (828 aa).

Disordered regions lie at residues 48–76 (SYSG…SEEF) and 112–148 (ASQE…ESTL). Over residues 49 to 58 (YSGSTTTLSL) the composition is skewed to polar residues. Residues 65–74 (LETGSSSGSE) are compositionally biased toward low complexity. Positions 116–126 (DPIEVEQEESS) are enriched in acidic residues. The span at 127 to 144 (DTNKVKEEPKIEEVKDIE) shows a compositional bias: basic and acidic residues. In terms of domain architecture, tr-type G spans 326-496 (SRAPVVTVMG…LLIAEMQNLK (171 aa)). A G1 region spans residues 335-342 (GHVDHGKT). Position 335 to 342 (335 to 342 (GHVDHGKT)) interacts with GTP. Residues 360-364 (GITQH) form a G2 region. The G3 stretch occupies residues 382–385 (DTPG). Residues 382–386 (DTPGH) and 436–439 (NKID) contribute to the GTP site. The segment at 436-439 (NKID) is G4. The segment at 472–474 (SAL) is G5.

It belongs to the TRAFAC class translation factor GTPase superfamily. Classic translation factor GTPase family. IF-2 subfamily.

The protein resides in the cytoplasm. In terms of biological role, one of the essential components for the initiation of protein synthesis. Protects formylmethionyl-tRNA from spontaneous hydrolysis and promotes its binding to the 30S ribosomal subunits. Also involved in the hydrolysis of GTP during the formation of the 70S ribosomal complex. In Rickettsia bellii (strain OSU 85-389), this protein is Translation initiation factor IF-2.